We begin with the raw amino-acid sequence, 294 residues long: Picrinine-N-methytransferase TMT2 (294 aa).

Residues 75–84 are SAM motif I; sequence LLDVGCGLGG. The short motif at 137-143 is the Vacuolar targeting signal element; the sequence is DGEFDVV. The SAM motif II stretch occupies residues 138 to 146; the sequence is GEFDVVFTL. An SAM motif III region spans residues 165 to 174; sequence VGSPGAAIVV.

This sequence belongs to the class I-like SAM-binding methyltransferase superfamily. gTMT family. Homodimer.

Its subcellular location is the vacuole membrane. It carries out the reaction picrinine + S-adenosyl-L-methionine = ervincine + S-adenosyl-L-homocysteine + H(+). Its pathway is alkaloid biosynthesis; vindoline biosynthesis. Its function is as follows. S-adenosyl-L-methionine-dependent N-methyltransferase involved in the biosynthesis of biologically active monoterpenoid indole alkaloids (MIAs) natural products including vindoline. Catalyzes the conversion of picrinine to N-methylpicrinine (ervincine). The chain is Picrinine-N-methytransferase TMT2 from Catharanthus roseus (Madagascar periwinkle).